Reading from the N-terminus, the 404-residue chain is Dihydroorotase (404 aa).

The Zn(2+) site is built by H57 and H59. Residues 59–61 (HLR) and N91 contribute to the substrate site. Positions 135, 164, 204, and 272 each coordinate Zn(2+). K135 carries the N6-carboxylysine modification. D272 is a catalytic residue. Residues H276 and 286–287 (AG) each bind substrate.

Belongs to the metallo-dependent hydrolases superfamily. DHOase family. Class I DHOase subfamily. The cofactor is Zn(2+).

The enzyme catalyses (S)-dihydroorotate + H2O = N-carbamoyl-L-aspartate + H(+). Its pathway is pyrimidine metabolism; UMP biosynthesis via de novo pathway; (S)-dihydroorotate from bicarbonate: step 3/3. Catalyzes the reversible cyclization of carbamoyl aspartate to dihydroorotate. This is Dihydroorotase from Pyrococcus abyssi (strain GE5 / Orsay).